Consider the following 393-residue polypeptide: Lipid-A-disaccharide synthase (393 aa).

The protein belongs to the LpxB family.

The enzyme catalyses a lipid X + a UDP-2-N,3-O-bis[(3R)-3-hydroxyacyl]-alpha-D-glucosamine = a lipid A disaccharide + UDP + H(+). It participates in bacterial outer membrane biogenesis; LPS lipid A biosynthesis. Condensation of UDP-2,3-diacylglucosamine and 2,3-diacylglucosamine-1-phosphate to form lipid A disaccharide, a precursor of lipid A, a phosphorylated glycolipid that anchors the lipopolysaccharide to the outer membrane of the cell. This Actinobacillus pleuropneumoniae serotype 5b (strain L20) protein is Lipid-A-disaccharide synthase.